The chain runs to 413 residues: Eukaryotic initiation factor 4A-8 (413 aa).

Residues 40–68 (DSFDAMGLQENLLRGIYAYGFEKPSAIQQ) carry the Q motif motif. One can recognise a Helicase ATP-binding domain in the interval 71–241 (IVPFCKGLDV…RKFMNKPVRI (171 aa)). Residue 84 to 91 (AQSGTGKT) participates in ATP binding. The short motif at 189 to 192 (DEAD) is the DEAD box element. The region spanning 252-413 (GIKQFYVNVD…ELPSNVADLL (162 aa)) is the Helicase C-terminal domain.

Belongs to the DEAD box helicase family. eIF4A subfamily. EIF4F is a multi-subunit complex, the composition of which varies with external and internal environmental conditions. It is composed of at least EIF4A, EIF4E and EIF4G. In terms of tissue distribution, pollen specific.

The enzyme catalyses ATP + H2O = ADP + phosphate + H(+). Functionally, ATP-dependent RNA helicase which is a subunit of the eIF4F complex involved in cap recognition and is required for mRNA binding to ribosome. In the current model of translation initiation, eIF4A unwinds RNA secondary structures in the 5'-UTR of mRNAs which is necessary to allow efficient binding of the small ribosomal subunit, and subsequent scanning for the initiator codon. The protein is Eukaryotic initiation factor 4A-8 of Nicotiana tabacum (Common tobacco).